Here is a 237-residue protein sequence, read N- to C-terminus: Periplasmic deoxyribonuclease (237 aa).

A signal peptide spans M1–A27.

Belongs to the EndA/NucM nuclease family.

The protein localises to the periplasm. In terms of biological role, endonuclease which is capable of degrading plasmid DNA. The polypeptide is Periplasmic deoxyribonuclease (dnsH) (Aeromonas hydrophila).